The primary structure comprises 158 residues: Ribosome-binding factor A (158 aa).

Positions Arg-127–Asp-158 are disordered. Over residues Gly-134–Ala-143 the composition is skewed to basic and acidic residues.

It belongs to the RbfA family. As to quaternary structure, monomer. Binds 30S ribosomal subunits, but not 50S ribosomal subunits or 70S ribosomes.

The protein localises to the cytoplasm. Its function is as follows. One of several proteins that assist in the late maturation steps of the functional core of the 30S ribosomal subunit. Associates with free 30S ribosomal subunits (but not with 30S subunits that are part of 70S ribosomes or polysomes). Required for efficient processing of 16S rRNA. May interact with the 5'-terminal helix region of 16S rRNA. The chain is Ribosome-binding factor A from Mycobacteroides abscessus (strain ATCC 19977 / DSM 44196 / CCUG 20993 / CIP 104536 / JCM 13569 / NCTC 13031 / TMC 1543 / L948) (Mycobacterium abscessus).